Reading from the N-terminus, the 325-residue chain is Tetraacyldisaccharide 4'-kinase (325 aa).

Position 55-62 (55-62 (TAGGNGKT)) interacts with ATP.

It belongs to the LpxK family.

It carries out the reaction a lipid A disaccharide + ATP = a lipid IVA + ADP + H(+). Its pathway is glycolipid biosynthesis; lipid IV(A) biosynthesis; lipid IV(A) from (3R)-3-hydroxytetradecanoyl-[acyl-carrier-protein] and UDP-N-acetyl-alpha-D-glucosamine: step 6/6. Functionally, transfers the gamma-phosphate of ATP to the 4'-position of a tetraacyldisaccharide 1-phosphate intermediate (termed DS-1-P) to form tetraacyldisaccharide 1,4'-bis-phosphate (lipid IVA). This chain is Tetraacyldisaccharide 4'-kinase, found in Salmonella typhi.